Reading from the N-terminus, the 195-residue chain is Putative NADH dehydrogenase/NAD(P)H nitroreductase Caul_0018 (195 aa).

This sequence belongs to the nitroreductase family. HadB/RutE subfamily. The cofactor is FMN.

The sequence is that of Putative NADH dehydrogenase/NAD(P)H nitroreductase Caul_0018 from Caulobacter sp. (strain K31).